Consider the following 300-residue polypeptide: Solute carrier family 25 member 35 (300 aa).

3 Solcar repeats span residues 1 to 90 (MDFL…AEAG), 100 to 193 (HSPA…TKDL), and 203 to 294 (QSWK…LRSL). 6 helical membrane passes run 38–58 (TYQR…KVDG), 59–79 (LAAL…MNGI), 91–119 (GYLH…GAYL), 169–190 (ALGG…FSST), 205–225 (WKLA…AMAP), and 277–300 (LGPH…TDTK).

The protein belongs to the mitochondrial carrier (TC 2.A.29) family.

The protein localises to the mitochondrion inner membrane. The enzyme catalyses a dicarboxylate(in) + sulfate(out) = a dicarboxylate(out) + sulfate(in). Its function is as follows. Putative antiporter that exchanges dicarboxylates and sulfur oxoanions across the inner membrane of mitochondria. This chain is Solute carrier family 25 member 35 (SLC25A35), found in Homo sapiens (Human).